Reading from the N-terminus, the 165-residue chain is Ribosome maturation factor RimM (165 aa).

The PRC barrel domain occupies 90–161 (EDEYFIVDLV…LITIRPSGEW (72 aa)).

The protein belongs to the RimM family. Binds ribosomal protein uS19.

It localises to the cytoplasm. Its function is as follows. An accessory protein needed during the final step in the assembly of 30S ribosomal subunit, possibly for assembly of the head region. Essential for efficient processing of 16S rRNA. May be needed both before and after RbfA during the maturation of 16S rRNA. It has affinity for free ribosomal 30S subunits but not for 70S ribosomes. The chain is Ribosome maturation factor RimM from Clostridium perfringens (strain ATCC 13124 / DSM 756 / JCM 1290 / NCIMB 6125 / NCTC 8237 / Type A).